The following is a 272-amino-acid chain: Alcohol dehydrogenase-related 31 kDa protein (272 aa).

11–34 (YVADCGGIALETSKVLMTKNIAKL) contacts NAD(+). Residue S139 coordinates substrate. Catalysis depends on Y152, which acts as the Proton acceptor.

It belongs to the short-chain dehydrogenases/reductases (SDR) family.

In Drosophila melanogaster (Fruit fly), this protein is Alcohol dehydrogenase-related 31 kDa protein (Adhr).